Here is a 282-residue protein sequence, read N- to C-terminus: tRNA uridine(34) hydroxylase (282 aa).

Positions 128–222 (DGRPVVMLDT…YFEEVGGSHY (95 aa)) constitute a Rhodanese domain. Residue cysteine 182 is the Cysteine persulfide intermediate of the active site.

This sequence belongs to the TrhO family.

It carries out the reaction uridine(34) in tRNA + AH2 + O2 = 5-hydroxyuridine(34) in tRNA + A + H2O. In terms of biological role, catalyzes oxygen-dependent 5-hydroxyuridine (ho5U) modification at position 34 in tRNAs. The polypeptide is tRNA uridine(34) hydroxylase (Cupriavidus metallidurans (strain ATCC 43123 / DSM 2839 / NBRC 102507 / CH34) (Ralstonia metallidurans)).